We begin with the raw amino-acid sequence, 308 residues long: GMP synthase [glutamine-hydrolyzing] subunit B (308 aa).

The region spanning 1-185 (MNWEKFVEEK…LGLPEKIYNR (185 aa)) is the GMPS ATP-PPase domain. An ATP-binding site is contributed by 28–34 (SGGVDSS).

As to quaternary structure, heterodimer composed of a glutamine amidotransferase subunit (A) and a GMP-binding subunit (B).

It catalyses the reaction XMP + L-glutamine + ATP + H2O = GMP + L-glutamate + AMP + diphosphate + 2 H(+). It functions in the pathway purine metabolism; GMP biosynthesis; GMP from XMP (L-Gln route): step 1/1. In terms of biological role, catalyzes the synthesis of GMP from XMP. The polypeptide is GMP synthase [glutamine-hydrolyzing] subunit B (guaAB) (Pyrococcus abyssi (strain GE5 / Orsay)).